The chain runs to 133 residues: Small ribosomal subunit protein uS9 (133 aa).

The tract at residues 97–133 (MKQELKSQGFLTRDPRKKERKKYGRKKARKSFQFSKR) is disordered. Residues 114 to 133 (KERKKYGRKKARKSFQFSKR) are compositionally biased toward basic residues.

It belongs to the universal ribosomal protein uS9 family.

The chain is Small ribosomal subunit protein uS9 (rpsI) from Chlamydia muridarum (strain MoPn / Nigg).